The chain runs to 419 residues: Peroxisomal membrane protein PMP47B (419 aa).

Solcar repeat units follow at residues 6–120 (YDDL…TGKT), 142–230 (LSVW…LKSF), and 239–369 (VTPV…LLIL). Residues 12 to 32 (AFAGAGGGLLSMTLTYPLVTL) traverse the membrane as a helical segment. Residues 44-53 (KNEEEEKENS) show a composition bias toward basic and acidic residues. Positions 44-69 (KNEEEEKENSNEDGSLSPKSSNTSNI) are disordered. A compositionally biased stretch (polar residues) spans 56–69 (DGSLSPKSSNTSNI). 3 consecutive transmembrane segments (helical) span residues 98–118 (SALF…ELTG), 204–224 (FTGI…YTIF), and 245–265 (LLLG…YITL). The segment at 274 to 305 (MTENNEDSEKERTDSVQSLPEDGSDEDNSKEN) is disordered. 2 consecutive transmembrane segments (helical) span residues 310–330 (TINK…IIGY) and 349–369 (LLQS…LLIL).

This sequence belongs to the mitochondrial carrier (TC 2.A.29) family.

Its subcellular location is the peroxisome membrane. May have transport activity. The sequence is that of Peroxisomal membrane protein PMP47B (PMP47B) from Candida boidinii (Yeast).